Reading from the N-terminus, the 319-residue chain is Histidinol-phosphate aminotransferase 1 (319 aa).

Lys-182 is subject to N6-(pyridoxal phosphate)lysine.

It belongs to the class-II pyridoxal-phosphate-dependent aminotransferase family. Histidinol-phosphate aminotransferase subfamily. Pyridoxal 5'-phosphate serves as cofactor.

It catalyses the reaction L-histidinol phosphate + 2-oxoglutarate = 3-(imidazol-4-yl)-2-oxopropyl phosphate + L-glutamate. The protein operates within amino-acid biosynthesis; L-histidine biosynthesis; L-histidine from 5-phospho-alpha-D-ribose 1-diphosphate: step 7/9. The polypeptide is Histidinol-phosphate aminotransferase 1 (hisC1) (Archaeoglobus fulgidus (strain ATCC 49558 / DSM 4304 / JCM 9628 / NBRC 100126 / VC-16)).